Consider the following 1600-residue polypeptide: E3 ubiquitin-protein ligase listerin (1600 aa).

11 HEAT repeats span residues 31–65, 114–150, 161–202, 245–288, 291–344, 526–606, 853–904, 962–986, 1045–1083, 1289–1324, and 1325–1369; these read SSVPQDVIVPFKNLLKRDSTTKSKALEEILACVKK, KTLPKLVGPWVAGTFDKDKGVARAALAVSAHILDSDQ, GKLL…SSMA, YQLV…DLLR, ISVT…PDYA, RNYK…AALS, YTTN…DIRT, YASKALTELFQALVSVHGYPAGAKF, LYNVVLLNICLSVYPPAKTPVEQRKLVFALKQFTTWVQT, VDVRSYLLGWHLVFDAYNQAPLQVRKQYTDSLKADN, and SLNA…EEGT. Residues 1537–1583 form an RING-type; degenerate zinc finger; the sequence is CPICYAVVSADKKLPDKRCSTCNNLFHRLCLYKWFQNSNKNTCPLCR.

The protein belongs to the LTN1 family. As to quaternary structure, component of the ribosome quality control complex (RQC), composed of the E3 ubiquitin ligase RKR1/LTN1, RQC1 and RQC2, as well as CDC48 and its ubiquitin-binding cofactors associated with the 60S ribosomal subunits.

Its subcellular location is the nucleus. It localises to the cytoplasm. The protein localises to the cytosol. It catalyses the reaction S-ubiquitinyl-[E2 ubiquitin-conjugating enzyme]-L-cysteine + [acceptor protein]-L-lysine = [E2 ubiquitin-conjugating enzyme]-L-cysteine + N(6)-ubiquitinyl-[acceptor protein]-L-lysine.. It functions in the pathway protein modification; protein ubiquitination. In terms of biological role, E3 ubiquitin-protein ligase component of the ribosome quality control complex (RQC), a ribosome-associated complex that mediates ubiquitination and extraction of incompletely synthesized nascent chains for proteasomal degradation. Mediates ubiquitination of proteins derived from mRNAs lacking stop codons (non-stop proteins) and other translation arrest products induced by poly-lysine sequences and tandem rare codons. Ubiquitination leads to CDC48 recruitment for extraction and degradation of the incomplete translation product. May indirectly play a role in chromatin function and transcription. This is E3 ubiquitin-protein ligase listerin (rkr-1) from Neurospora crassa (strain ATCC 24698 / 74-OR23-1A / CBS 708.71 / DSM 1257 / FGSC 987).